We begin with the raw amino-acid sequence, 161 residues long: Troponin C, slow skeletal and cardiac muscles (161 aa).

Methionine 1 bears the N-acetylmethionine mark. 4 EF-hand domains span residues 16-51 (QKNE…LGQN), 52-87 (PTPE…CMKD), 92-127 (KTEE…TGET), and 128-161 (ITED…KGVE). Aspartate 65, aspartate 67, serine 69, threonine 71, glutamate 76, aspartate 105, asparagine 107, aspartate 109, tyrosine 111, glutamate 116, aspartate 141, asparagine 143, aspartate 145, arginine 147, and glutamate 152 together coordinate Ca(2+).

The protein belongs to the troponin C family.

Functionally, troponin is the central regulatory protein of striated muscle contraction. Tn consists of three components: Tn-I which is the inhibitor of actomyosin ATPase, Tn-T which contains the binding site for tropomyosin and Tn-C. The binding of calcium to Tn-C abolishes the inhibitory action of Tn on actin filaments. The polypeptide is Troponin C, slow skeletal and cardiac muscles (TNNC1) (Gallus gallus (Chicken)).